We begin with the raw amino-acid sequence, 172 residues long: Shikimate kinase (172 aa).

14 to 19 (GAGKST) is an ATP binding site. S18 contacts Mg(2+). D36, R60, and G82 together coordinate substrate. R120 serves as a coordination point for ATP. Substrate is bound at residue R139. Q156 contacts ATP.

This sequence belongs to the shikimate kinase family. In terms of assembly, monomer. Mg(2+) is required as a cofactor.

It localises to the cytoplasm. It catalyses the reaction shikimate + ATP = 3-phosphoshikimate + ADP + H(+). The protein operates within metabolic intermediate biosynthesis; chorismate biosynthesis; chorismate from D-erythrose 4-phosphate and phosphoenolpyruvate: step 5/7. Its function is as follows. Catalyzes the specific phosphorylation of the 3-hydroxyl group of shikimic acid using ATP as a cosubstrate. The sequence is that of Shikimate kinase from Aliivibrio salmonicida (strain LFI1238) (Vibrio salmonicida (strain LFI1238)).